We begin with the raw amino-acid sequence, 281 residues long: Glycerol uptake facilitator protein (281 aa).

At 1 to 5 the chain is on the cytoplasmic side; that stretch reads MSQTS. Residues 6–34 form a helical membrane-spanning segment; the sequence is TLKGQCIAEFLGTGLLIFFGVGCVAALKV. Residues 35–39 lie on the Periplasmic side of the membrane; sequence AGASF. The helical transmembrane segment at 40–60 threads the bilayer; sequence GQWEISVIWGLGVAMAIYLTA. At 61-63 the chain is on the cytoplasmic side; the sequence is GVS. An intramembrane segment occupies 64 to 67; it reads GAHL. Positions 68–70 match the NPA 1 motif; it reads NPA. Positions 68 to 78 form an intramembrane region, helical; that stretch reads NPAVTIALWLF. The Cytoplasmic segment spans residues 79 to 84; that stretch reads ACFDKR. The chain crosses the membrane as a helical span at residues 85–108; that stretch reads KVIPFIVSQVAGAFCAAALVYGLY. The Periplasmic portion of the chain corresponds to 109–143; it reads YNLFFDFEQTHHIVRGSVESVDLAGTFSTYPNPHI. A helical membrane pass occupies residues 144–169; it reads NFVQAFAVEMVITAILMGLILALTDD. Over 170-177 the chain is Cytoplasmic; that stretch reads GNGVPRGP. The chain crosses the membrane as a helical span at residues 178–194; sequence LAPLLIGLLIAVIGASM. Residues 195-198 are Periplasmic-facing; sequence GPLT. Residues 199–202 lie within the membrane without spanning it; the sequence is GFAM. An NPA 2 motif is present at residues 203 to 205; the sequence is NPA. The helical intramembrane region spans 203-216; it reads NPARDFGPKVFAWL. The Periplasmic segment spans residues 217 to 231; that stretch reads AGWGNVAFTGGRDIP. Residues 232–254 traverse the membrane as a helical segment; it reads YFLVPLFGPIVGAIVGAFAYRKL. Residues 255–281 are Cytoplasmic-facing; it reads IGRHLPCDICVVEEKETTTPSEQKASL.

It belongs to the MIP/aquaporin (TC 1.A.8) family. As to quaternary structure, homotetramer.

It is found in the cell inner membrane. The catalysed reaction is glycerol(in) = glycerol(out). In terms of biological role, mediates glycerol diffusion across the cytoplasmic membrane via a pore-type mechanism. The protein is Glycerol uptake facilitator protein (glpF) of Escherichia coli O157:H7.